The sequence spans 87 residues: Small ribosomal subunit protein bS16 (87 aa).

The protein belongs to the bacterial ribosomal protein bS16 family.

The protein is Small ribosomal subunit protein bS16 of Buchnera aphidicola subsp. Baizongia pistaciae (strain Bp).